Here is a 125-residue protein sequence, read N- to C-terminus: Large ribosomal subunit protein eL32 (125 aa).

It belongs to the eukaryotic ribosomal protein eL32 family.

This Sulfolobus acidocaldarius (strain ATCC 33909 / DSM 639 / JCM 8929 / NBRC 15157 / NCIMB 11770) protein is Large ribosomal subunit protein eL32 (rpl32e).